A 360-amino-acid polypeptide reads, in one-letter code: Alpha-ketoglutarate dependent kainoid synthase (360 aa).

A Fe2OG dioxygenase domain is found at 200–310 (MFFSNRIYPE…RASLISFYEP (111 aa)). Fe cation is bound by residues His-225, Asp-227, and His-286. Position 301 (Arg-301) interacts with 2-oxoglutarate.

This sequence belongs to the iron/ascorbate-dependent oxidoreductase family. Fe(2+) is required as a cofactor.

The catalysed reaction is prekainate + 2-oxoglutarate + O2 = kainate + succinate + CO2 + H2O. It carries out the reaction prekainate + 2-oxoglutarate + O2 + H(+) = kainate lactone + succinate + CO2 + H2O. The protein operates within secondary metabolite biosynthesis. With respect to regulation, inhibited by the iron chelator EDTA. Its function is as follows. Iron/ascorbate-dependent oxidoreductase: part of the gene cluster that mediates the biosynthesis of kainic acid (KA) and derivatives, natural products with neurochemical activity acting as ionotropic glutamate receptor (iGluR) agonists, thus being neurotoxins. Catalyzes the conversion of prekainic acid to kainic acid and kainic acid lactone. The chain is Alpha-ketoglutarate dependent kainoid synthase from Digenea simplex (Marine red alga).